Consider the following 78-residue polypeptide: Large ribosomal subunit protein bL28 (78 aa).

Belongs to the bacterial ribosomal protein bL28 family.

This chain is Large ribosomal subunit protein bL28, found in Thiobacillus denitrificans (strain ATCC 25259 / T1).